A 474-amino-acid polypeptide reads, in one-letter code: UDP-N-acetylmuramate--L-alanine ligase (474 aa).

Residue 112 to 118 (GTHGKTT) coordinates ATP.

This sequence belongs to the MurCDEF family.

The protein resides in the cytoplasm. The catalysed reaction is UDP-N-acetyl-alpha-D-muramate + L-alanine + ATP = UDP-N-acetyl-alpha-D-muramoyl-L-alanine + ADP + phosphate + H(+). It participates in cell wall biogenesis; peptidoglycan biosynthesis. Cell wall formation. This chain is UDP-N-acetylmuramate--L-alanine ligase, found in Cupriavidus taiwanensis (strain DSM 17343 / BCRC 17206 / CCUG 44338 / CIP 107171 / LMG 19424 / R1) (Ralstonia taiwanensis (strain LMG 19424)).